Reading from the N-terminus, the 236-residue chain is 2,3,4,5-tetrahydropyridine-2,6-dicarboxylate N-acetyltransferase (236 aa).

This sequence belongs to the transferase hexapeptide repeat family. DapH subfamily.

The enzyme catalyses (S)-2,3,4,5-tetrahydrodipicolinate + acetyl-CoA + H2O = L-2-acetamido-6-oxoheptanedioate + CoA. The protein operates within amino-acid biosynthesis; L-lysine biosynthesis via DAP pathway; LL-2,6-diaminopimelate from (S)-tetrahydrodipicolinate (acetylase route): step 1/3. Functionally, catalyzes the transfer of an acetyl group from acetyl-CoA to tetrahydrodipicolinate. The polypeptide is 2,3,4,5-tetrahydropyridine-2,6-dicarboxylate N-acetyltransferase (Bacillus velezensis (strain DSM 23117 / BGSC 10A6 / LMG 26770 / FZB42) (Bacillus amyloliquefaciens subsp. plantarum)).